The sequence spans 400 residues: Mu-type opioid receptor (400 aa).

Residues 1-68 lie on the Extracellular side of the membrane; sequence MDSSAVPTNA…CPPTGSPSMI (68 aa). Asn-9, Asn-12, Asn-33, Asn-40, and Asn-48 each carry an N-linked (GlcNAc...) asparagine glycan. Residues 69–93 form a helical membrane-spanning segment; sequence TAITIMALYSIVCVVGLFGNFLVMY. Residues 94-106 lie on the Cytoplasmic side of the membrane; sequence VIVRYTKMKTATN. The helical transmembrane segment at 107-131 threads the bilayer; sequence IYIFNLALADALVTSTLPFQSVNYL. Over 132 to 142 the chain is Extracellular; that stretch reads MGTWPFGTILC. A disulfide bond links Cys-142 and Cys-219. A helical membrane pass occupies residues 143–165; it reads KIVISIDYYNMSTSIFTLCTMSV. At 166–185 the chain is on the cytoplasmic side; the sequence is DRYIAVCHPVKALDFRTPRN. Phosphotyrosine is present on Tyr-168. A helical transmembrane segment spans residues 186–207; the sequence is AKIINVCNWILSSAIGLPVMFM. Topologically, residues 208 to 230 are extracellular; it reads ATTKYRQGSIDCTLTFSHPSWYW. Residues 231-255 traverse the membrane as a helical segment; it reads ENLLKICVFIFAFIMPVLIITVCYG. Residues 256-283 lie on the Cytoplasmic side of the membrane; it reads LMILRLKSVRMLSGSKEKDRNLRRITRM. The helical transmembrane segment at 284–306 threads the bilayer; that stretch reads VLVVVAVFIICWTPIHIYVIIKA. The Extracellular segment spans residues 307 to 314; that stretch reads LVTIPETT. Residues 315 to 338 traverse the membrane as a helical segment; sequence FQTVSWHFCIALGYTNSCLNPVLY. Positions 334-338 match the NPxxY; plays a role in stabilizing the activated conformation of the receptor motif; sequence NPVLY. Over 339–400 the chain is Cytoplasmic; sequence AFLDEDFKRC…NLEAETAPLP (62 aa). A lipid anchor (S-palmitoyl cysteine) is attached at Cys-353. The interval 364–386 is disordered; that stretch reads NSTRIRQNTRDHPSTANTVDRTN. Ser-365 bears the Phosphoserine mark. Residue Thr-372 is modified to Phosphothreonine. The residue at position 377 (Ser-377) is a Phosphoserine. A Phosphothreonine modification is found at Thr-396.

The protein belongs to the G-protein coupled receptor 1 family. In terms of assembly, forms homooligomers and heterooligomers with other GPCRs, such as OPRD1, OPRK1, OPRL1, NPFFR2, ADRA2A, SSTR2, CNR1 and CCR5 (probably in dimeric forms). Interacts with heterotrimeric G proteins; interaction with a heterotrimeric complex containing GNAI1, GNB1 and GNG2 stabilizes the active conformation of the receptor and increases its affinity for endomorphin-2, the synthetic opioid peptide DAMGO and for morphinan agonists. Interacts with PPL; the interaction disrupts agonist-mediated G-protein activation. Interacts (via C-terminus) with DNAJB4 (via C-terminus). Interacts with calmodulin; the interaction inhibits the constitutive activity of OPRM1; it abolishes basal and attenuates agonist-stimulated G-protein coupling. Interacts with FLNA, PLD2, RANBP9 and WLS and GPM6A. Interacts with RTP4. Interacts with SYP and GNAS. Interacts with RGS9, RGS17, RGS20, RGS4, PPP1R9B and HINT1. In terms of processing, phosphorylated. Differentially phosphorylated in basal and agonist-induced conditions. Agonist-mediated phosphorylation modulates receptor internalization. Phosphorylated by GRK2 in a agonist-dependent manner. Phosphorylation at Tyr-168 requires receptor activation, is dependent on non-receptor protein tyrosine kinase Src and results in a decrease in agonist efficacy by reducing G-protein coupling efficiency. Phosphorylated on tyrosine residues; the phosphorylation is involved in agonist-induced G-protein-independent receptor down-regulation. Phosphorylation at Ser-377 is involved in G-protein-dependent but not beta-arrestin-dependent activation of the ERK pathway. Ubiquitinated. A basal ubiquitination seems not to be related to degradation. Ubiquitination is increased upon formation of OPRM1:OPRD1 oligomers leading to proteasomal degradation; the ubiquitination is diminished by RTP4.

The protein resides in the cell membrane. Its subcellular location is the cell projection. The protein localises to the axon. It localises to the perikaryon. It is found in the dendrite. The protein resides in the endosome. Receptor for endogenous opioids such as beta-endorphin and endomorphin. Receptor for natural and synthetic opioids including morphine, heroin, DAMGO, fentanyl, etorphine, buprenorphin and methadone. Also activated by enkephalin peptides, such as Met-enkephalin or Met-enkephalin-Arg-Phe, with higher affinity for Met-enkephalin-Arg-Phe. Agonist binding to the receptor induces coupling to an inactive GDP-bound heterotrimeric G-protein complex and subsequent exchange of GDP for GTP in the G-protein alpha subunit leading to dissociation of the G-protein complex with the free GTP-bound G-protein alpha and the G-protein beta-gamma dimer activating downstream cellular effectors. The agonist- and cell type-specific activity is predominantly coupled to pertussis toxin-sensitive G(i) and G(o) G alpha proteins, GNAI1, GNAI2, GNAI3 and GNAO1, and to a lesser extent to pertussis toxin-insensitive G alpha proteins GNAZ and GNA15. They mediate an array of downstream cellular responses, including inhibition of adenylate cyclase activity and both N-type and L-type calcium channels, activation of inward rectifying potassium channels, mitogen-activated protein kinase (MAPK), phospholipase C (PLC), phosphoinositide/protein kinase (PKC), phosphoinositide 3-kinase (PI3K) and regulation of NF-kappa-B. Also couples to adenylate cyclase stimulatory G alpha proteins. The selective temporal coupling to G-proteins and subsequent signaling can be regulated by RGSZ proteins, such as RGS9, RGS17 and RGS4. Phosphorylation by members of the GPRK subfamily of Ser/Thr protein kinases and association with beta-arrestins is involved in short-term receptor desensitization. Beta-arrestins associate with the GPRK-phosphorylated receptor and uncouple it from the G-protein thus terminating signal transduction. The phosphorylated receptor is internalized through endocytosis via clathrin-coated pits which involves beta-arrestins. The activation of the ERK pathway occurs either in a G-protein-dependent or a beta-arrestin-dependent manner and is regulated by agonist-specific receptor phosphorylation. Acts as a class A G-protein coupled receptor (GPCR) which dissociates from beta-arrestin at or near the plasma membrane and undergoes rapid recycling. Receptor down-regulation pathways are varying with the agonist and occur dependent or independent of G-protein coupling. Endogenous ligands induce rapid desensitization, endocytosis and recycling. Heterooligomerization with other GPCRs can modulate agonist binding, signaling and trafficking properties. Involved in neurogenesis. This chain is Mu-type opioid receptor (OPRM1), found in Macaca mulatta (Rhesus macaque).